Consider the following 497-residue polypeptide: Glycerol kinase (497 aa).

Thr21 is an ADP binding site. ATP is bound by residues Thr21 and Thr22. Thr21 contributes to the sn-glycerol 3-phosphate binding site. ADP is bound at residue Arg25. Positions 88, 89, 140, and 244 each coordinate sn-glycerol 3-phosphate. Glycerol is bound by residues Arg88, Glu89, Tyr140, Asp244, and Gln245. Residues Thr266 and Gly309 each coordinate ADP. 4 residues coordinate ATP: Thr266, Gly309, Gln313, and Gly410. The ADP site is built by Gly410 and Asn414.

Belongs to the FGGY kinase family.

It catalyses the reaction glycerol + ATP = sn-glycerol 3-phosphate + ADP + H(+). It functions in the pathway polyol metabolism; glycerol degradation via glycerol kinase pathway; sn-glycerol 3-phosphate from glycerol: step 1/1. Its activity is regulated as follows. Inhibited by fructose 1,6-bisphosphate (FBP). Its function is as follows. Key enzyme in the regulation of glycerol uptake and metabolism. Catalyzes the phosphorylation of glycerol to yield sn-glycerol 3-phosphate. The polypeptide is Glycerol kinase (Gloeobacter violaceus (strain ATCC 29082 / PCC 7421)).